We begin with the raw amino-acid sequence, 185 residues long: Peptidyl-tRNA hydrolase (185 aa).

Tyr-14 provides a ligand contact to tRNA. His-19 (proton acceptor) is an active-site residue. Positions 64, 66, and 112 each coordinate tRNA.

The protein belongs to the PTH family. Monomer.

The protein resides in the cytoplasm. The catalysed reaction is an N-acyl-L-alpha-aminoacyl-tRNA + H2O = an N-acyl-L-amino acid + a tRNA + H(+). Functionally, hydrolyzes ribosome-free peptidyl-tRNAs (with 1 or more amino acids incorporated), which drop off the ribosome during protein synthesis, or as a result of ribosome stalling. Catalyzes the release of premature peptidyl moieties from peptidyl-tRNA molecules trapped in stalled 50S ribosomal subunits, and thus maintains levels of free tRNAs and 50S ribosomes. The chain is Peptidyl-tRNA hydrolase from Ligilactobacillus salivarius (strain UCC118) (Lactobacillus salivarius).